Here is a 633-residue protein sequence, read N- to C-terminus: Threonine--tRNA ligase (633 aa).

An editing domain region spans residues 1–143; the sequence is MRALFLHSNR…SRTIKPKKVK (143 aa). Catalytic regions lie at residues 220–515 and 221–515; these read NPLN…PVLP and PLND…PVLP. Zn(2+)-binding residues include Cys314, His365, and His488.

This sequence belongs to the class-II aminoacyl-tRNA synthetase family. As to quaternary structure, homodimer. Requires Zn(2+) as cofactor.

The protein localises to the cytoplasm. It carries out the reaction tRNA(Thr) + L-threonine + ATP = L-threonyl-tRNA(Thr) + AMP + diphosphate + H(+). Catalyzes the attachment of threonine to tRNA(Thr) in a two-step reaction: L-threonine is first activated by ATP to form Thr-AMP and then transferred to the acceptor end of tRNA(Thr). Also edits incorrectly charged L-seryl-tRNA(Thr). In Nanoarchaeum equitans (strain Kin4-M), this protein is Threonine--tRNA ligase.